A 233-amino-acid polypeptide reads, in one-letter code: Homeobox protein EMX1 (233 aa).

Positions 135 to 194 (PKRIRTAFSPSQLLRLERAFEKNHYVVGAERKQLASSLSLSETQVKVWFQNRRTKYKRQK) form a DNA-binding region, homeobox. The tract at residues 192–233 (RQKLEEEGPDSDQKKKGSHHINRWRLATKQPNGEDIDVTSND) is disordered. The segment covering 193–206 (QKLEEEGPDSDQKK) has biased composition (basic and acidic residues).

It belongs to the EMX homeobox family.

It is found in the nucleus. Functionally, may function in combinations with OTX1/2 to specify cell fates in the developing central nervous system. In Xenopus tropicalis (Western clawed frog), this protein is Homeobox protein EMX1 (emx1).